The following is a 303-amino-acid chain: 4-diphosphocytidyl-2-C-methyl-D-erythritol kinase (303 aa).

Lys18 is a catalytic residue. Position 111 to 121 (111 to 121 (PVASGIGGGSA)) interacts with ATP. Asp153 is a catalytic residue.

The protein belongs to the GHMP kinase family. IspE subfamily.

It carries out the reaction 4-CDP-2-C-methyl-D-erythritol + ATP = 4-CDP-2-C-methyl-D-erythritol 2-phosphate + ADP + H(+). It functions in the pathway isoprenoid biosynthesis; isopentenyl diphosphate biosynthesis via DXP pathway; isopentenyl diphosphate from 1-deoxy-D-xylulose 5-phosphate: step 3/6. In terms of biological role, catalyzes the phosphorylation of the position 2 hydroxy group of 4-diphosphocytidyl-2C-methyl-D-erythritol. In Sinorhizobium medicae (strain WSM419) (Ensifer medicae), this protein is 4-diphosphocytidyl-2-C-methyl-D-erythritol kinase.